A 238-amino-acid polypeptide reads, in one-letter code: Pyridoxine 5'-phosphate synthase (238 aa).

Asparagine 9 is a binding site for 3-amino-2-oxopropyl phosphate. 11-12 (DH) lines the 1-deoxy-D-xylulose 5-phosphate pocket. Residue arginine 20 coordinates 3-amino-2-oxopropyl phosphate. Histidine 45 acts as the Proton acceptor in catalysis. 1-deoxy-D-xylulose 5-phosphate is bound by residues arginine 47 and histidine 52. Residue glutamate 72 is the Proton acceptor of the active site. A 1-deoxy-D-xylulose 5-phosphate-binding site is contributed by threonine 102. Histidine 189 functions as the Proton donor in the catalytic mechanism. 3-amino-2-oxopropyl phosphate contacts are provided by residues glycine 190 and 211 to 212 (GH).

It belongs to the PNP synthase family. As to quaternary structure, homooctamer; tetramer of dimers.

The protein resides in the cytoplasm. The enzyme catalyses 3-amino-2-oxopropyl phosphate + 1-deoxy-D-xylulose 5-phosphate = pyridoxine 5'-phosphate + phosphate + 2 H2O + H(+). It functions in the pathway cofactor biosynthesis; pyridoxine 5'-phosphate biosynthesis; pyridoxine 5'-phosphate from D-erythrose 4-phosphate: step 5/5. In terms of biological role, catalyzes the complicated ring closure reaction between the two acyclic compounds 1-deoxy-D-xylulose-5-phosphate (DXP) and 3-amino-2-oxopropyl phosphate (1-amino-acetone-3-phosphate or AAP) to form pyridoxine 5'-phosphate (PNP) and inorganic phosphate. This Ehrlichia ruminantium (strain Gardel) protein is Pyridoxine 5'-phosphate synthase.